Here is a 323-residue protein sequence, read N- to C-terminus: Aldo-keto reductase family 1 member C23-like protein (323 aa).

Gly-20–Tyr-24 is a binding site for NADP(+). Lys-31 is a binding site for substrate. Asp-50 serves as a coordination point for NADP(+). The Proton donor role is filled by Tyr-55. His-117 is a substrate binding site. NADP(+) contacts are provided by residues Ser-166–Asn-167, Gln-190, Tyr-216–Gln-222, and Lys-270–Asn-280.

The protein belongs to the aldo/keto reductase family. As to quaternary structure, monomer. As to expression, detected in endometrium surface epithelium (at protein level). Detected in endometrium.

The protein localises to the cytoplasm. Functionally, NADP-dependent oxidoreductase involved in steroid metabolism. May act on various hydroxysteroids. The protein is Aldo-keto reductase family 1 member C23-like protein (PGFS) of Equus caballus (Horse).